Here is a 316-residue protein sequence, read N- to C-terminus: Sideroflexin-4 (316 aa).

Transmembrane regions (helical) follow at residues 83 to 103, 141 to 161, 174 to 194, 230 to 250, and 263 to 283; these read QVFLPISAPLVVGSLIAHKGI, LLILGAVSYSTVTGALPQIIL, ICRSFLPVPLAAGLAAFNILV, ISRATLFGTTAALPTFLMALL, and IAPIGSMCTVITFGLMIPVSF.

It belongs to the sideroflexin family.

It localises to the mitochondrion inner membrane. In terms of biological role, mitochondrial amino-acid transporter. Does not act as a serine transporter: not able to mediate transport of serine into mitochondria. The polypeptide is Sideroflexin-4 (Danio rerio (Zebrafish)).